The sequence spans 274 residues: tRNA-cytidine(32) 2-sulfurtransferase (274 aa).

Positions 40–45 (SGGKDS) match the PP-loop motif motif. Residues Cys-115, Cys-118, and Cys-206 each contribute to the [4Fe-4S] cluster site.

This sequence belongs to the TtcA family. In terms of assembly, homodimer. Mg(2+) serves as cofactor. [4Fe-4S] cluster is required as a cofactor.

It localises to the cytoplasm. The enzyme catalyses cytidine(32) in tRNA + S-sulfanyl-L-cysteinyl-[cysteine desulfurase] + AH2 + ATP = 2-thiocytidine(32) in tRNA + L-cysteinyl-[cysteine desulfurase] + A + AMP + diphosphate + H(+). The protein operates within tRNA modification. Catalyzes the ATP-dependent 2-thiolation of cytidine in position 32 of tRNA, to form 2-thiocytidine (s(2)C32). The sulfur atoms are provided by the cysteine/cysteine desulfurase (IscS) system. This is tRNA-cytidine(32) 2-sulfurtransferase from Pseudomonas syringae pv. tomato (strain ATCC BAA-871 / DC3000).